We begin with the raw amino-acid sequence, 211 residues long: Ribonuclease HII (211 aa).

The RNase H type-2 domain maps to 2–211 (MLILGVDEAG…TAQRLKASSV (210 aa)). A divalent metal cation-binding residues include aspartate 8, glutamate 9, and aspartate 106.

This sequence belongs to the RNase HII family. It depends on Mn(2+) as a cofactor. Mg(2+) serves as cofactor.

The protein resides in the cytoplasm. It carries out the reaction Endonucleolytic cleavage to 5'-phosphomonoester.. In terms of biological role, endonuclease that specifically degrades the RNA of RNA-DNA hybrids. The polypeptide is Ribonuclease HII (Methanothrix thermoacetophila (strain DSM 6194 / JCM 14653 / NBRC 101360 / PT) (Methanosaeta thermophila)).